The chain runs to 183 residues: Small ribosomal subunit protein bS16 (183 aa).

The span at 149-161 shows a compositional bias: basic and acidic residues; sequence EKKAAEAAAKAEA. Residues 149–183 are disordered; it reads EKKAAEAAAKAEAEAANAPAEEAPAAEATEAPAEA. The span at 162-183 shows a compositional bias: low complexity; it reads EAANAPAEEAPAAEATEAPAEA.

The protein belongs to the bacterial ribosomal protein bS16 family.

This Phocaeicola vulgatus (strain ATCC 8482 / DSM 1447 / JCM 5826 / CCUG 4940 / NBRC 14291 / NCTC 11154) (Bacteroides vulgatus) protein is Small ribosomal subunit protein bS16.